Reading from the N-terminus, the 85-residue chain is uncharacterized protein (85 aa).

Residues 44 to 85 (EAHPSEHNGTVPRSLSQEWAKILAEEAEENSEENNDESEEDN) form a disordered region. Polar residues predominate over residues 50-60 (HNGTVPRSLSQ). The span at 68-85 (EEAEENSEENNDESEEDN) shows a compositional bias: acidic residues.

This is an uncharacterized protein from Haloarcula hispanica (His1V).